A 363-amino-acid chain; its full sequence is Regulator of G-protein signaling rgs-3 (363 aa).

The interval 1 to 70 (MWRSYKAETP…NSSATSPTPS (70 aa)) is disordered. Basic and acidic residues predominate over residues 21–35 (LNLHDSSESDHEGRQ). Low complexity-rich tracts occupy residues 36–50 (SRSA…APAS) and 58–70 (PITN…PTPS). 2 RGS domains span residues 112-225 (NCAN…LEYL) and 240-359 (SFEG…IDLL).

May be phosphorylated and activated by egl-4.

Modulates chemotaxis responses by regulating positively the sensitivity to CO2 levels in BAG neurons and by regulating negatively the sensitivity to quinine in ASH sensory neurons. The protein is Regulator of G-protein signaling rgs-3 (rgs-3) of Caenorhabditis elegans.